The following is a 259-amino-acid chain: Eukaryotic translation initiation factor 3 subunit J (259 aa).

Residues Met1 to Ser12 are compositionally biased toward low complexity. A sufficient for interaction with EIF3B region spans residues Met1–Val70. The disordered stretch occupies residues Met1 to Pro111. Ser12, Ser14, and Ser21 each carry phosphoserine. Over residues Glu41–Lys60 the composition is skewed to acidic residues. Residues Lys61–Lys107 show a composition bias toward basic and acidic residues. Residues Lys71–Thr136 are a coiled coil. Lys107 participates in a covalent cross-link: Glycyl lysine isopeptide (Lys-Gly) (interchain with G-Cter in SUMO2). Thr110 carries the post-translational modification Phosphothreonine. Ser128 is subject to Phosphoserine. Residues Ser218 to Tyr247 are disordered. Residues Tyr244–Met259 form a promotes stable association with the 40S ribosome region. Tyr255 bears the Phosphotyrosine mark.

This sequence belongs to the eIF-3 subunit J family. In terms of assembly, component of the eukaryotic translation initiation factor 3 (eIF-3) complex, which is composed of 13 subunits: EIF3A, EIF3B, EIF3C, EIF3D, EIF3E, EIF3F, EIF3G, EIF3H, EIF3I, EIF3J, EIF3K, EIF3L and EIF3M. The eIF-3 complex appears to include 3 stable modules: module A is composed of EIF3A, EIF3B, EIF3G and EIF3I; module B is composed of EIF3F, EIF3H, and EIF3M; and module C is composed of EIF3C, EIF3D, EIF3E, EIF3K and EIF3L. EIF3C of module C binds EIF3B of module A and EIF3H of module B, thereby linking the three modules. EIF3J is a labile subunit that binds to the eIF-3 complex via EIF3B. The eIF-3 complex interacts with RPS6KB1 under conditions of nutrient depletion. Mitogenic stimulation leads to binding and activation of a complex composed of MTOR and RPTOR, leading to phosphorylation and release of RPS6KB1 and binding of EIF4B to eIF-3. Phosphorylated. Phosphorylation is enhanced upon serum stimulation.

It is found in the cytoplasm. Its function is as follows. Component of the eukaryotic translation initiation factor 3 (eIF-3) complex, which is required for several steps in the initiation of protein synthesis. The eIF-3 complex associates with the 40S ribosome and facilitates the recruitment of eIF-1, eIF-1A, eIF-2:GTP:methionyl-tRNAi and eIF-5 to form the 43S pre-initiation complex (43S PIC). The eIF-3 complex stimulates mRNA recruitment to the 43S PIC and scanning of the mRNA for AUG recognition. The eIF-3 complex is also required for disassembly and recycling of post-termination ribosomal complexes and subsequently prevents premature joining of the 40S and 60S ribosomal subunits prior to initiation. The eIF-3 complex specifically targets and initiates translation of a subset of mRNAs involved in cell proliferation, including cell cycling, differentiation and apoptosis, and uses different modes of RNA stem-loop binding to exert either translational activation or repression. This subunit binds directly within the mRNA entry channel of the 40S ribosome to the aminoacyl (A) site. It may regulate the interaction between the 43S PIC and mRNA. The protein is Eukaryotic translation initiation factor 3 subunit J of Pongo abelii (Sumatran orangutan).